Consider the following 734-residue polypeptide: Photosystem I P700 chlorophyll a apoprotein A2 (734 aa).

Transmembrane regions (helical) follow at residues 46-69, 135-158, 175-199, 273-291, 330-353, 369-395, 417-439, and 517-535; these read IFAS…FHVA, LYTG…LHLQ, LNHH…HVAI, MAHH…GHMY, IHFQ…QHMY, AALY…IFFI, AIIS…LYVH, and FLVH…LILV. [4Fe-4S] cluster contacts are provided by Cys559 and Cys568. 2 helical membrane-spanning segments follow: residues 575–596 and 643–665; these read AFYL…YWHW and LSVW…MFLI. Residues His654, Met662, and Tyr670 each coordinate chlorophyll a. Trp671 contacts phylloquinone. A helical transmembrane segment spans residues 707–727; that stretch reads LVGLAHFSVGYIFTYAAFLIA.

It belongs to the PsaA/PsaB family. The PsaA/B heterodimer binds the P700 chlorophyll special pair and subsequent electron acceptors. PSI consists of a core antenna complex that captures photons, and an electron transfer chain that converts photonic excitation into a charge separation. The eukaryotic PSI reaction center is composed of at least 11 subunits. The cofactor is P700 is a chlorophyll a/chlorophyll a' dimer, A0 is one or more chlorophyll a, A1 is one or both phylloquinones and FX is a shared 4Fe-4S iron-sulfur center..

The protein resides in the plastid. It localises to the chloroplast thylakoid membrane. It catalyses the reaction reduced [plastocyanin] + hnu + oxidized [2Fe-2S]-[ferredoxin] = oxidized [plastocyanin] + reduced [2Fe-2S]-[ferredoxin]. PsaA and PsaB bind P700, the primary electron donor of photosystem I (PSI), as well as the electron acceptors A0, A1 and FX. PSI is a plastocyanin-ferredoxin oxidoreductase, converting photonic excitation into a charge separation, which transfers an electron from the donor P700 chlorophyll pair to the spectroscopically characterized acceptors A0, A1, FX, FA and FB in turn. Oxidized P700 is reduced on the lumenal side of the thylakoid membrane by plastocyanin. In Triticum aestivum (Wheat), this protein is Photosystem I P700 chlorophyll a apoprotein A2.